The sequence spans 213 residues: Adenylate kinase (213 aa).

Position 10–15 (10–15) interacts with ATP; the sequence is GCGKGT. The NMP stretch occupies residues 30-59; the sequence is STGDLMRKEISLNTTLGLKCQEYMNAGKYV. AMP-binding positions include Thr-31, Arg-36, 57-59, 83-86, and Gln-90; these read KYV and GYPR. Residues 124–161 form an LID region; that stretch reads NRLVCPLCKASFNLETRKPKQEGLCDFDNTKLVKRSDD. Residue Arg-125 coordinates ATP. 2 residues coordinate Zn(2+): Cys-128 and Cys-131. Residue 134–135 coordinates ATP; the sequence is SF. Zn(2+) is bound by residues Cys-148 and Asp-151. AMP-binding residues include Arg-158 and Arg-169. Asn-197 provides a ligand contact to ATP.

This sequence belongs to the adenylate kinase family. Monomer.

The protein localises to the cytoplasm. The catalysed reaction is AMP + ATP = 2 ADP. Its pathway is purine metabolism; AMP biosynthesis via salvage pathway; AMP from ADP: step 1/1. In terms of biological role, catalyzes the reversible transfer of the terminal phosphate group between ATP and AMP. Plays an important role in cellular energy homeostasis and in adenine nucleotide metabolism. The sequence is that of Adenylate kinase from Mycoplasma capricolum subsp. capricolum (strain California kid / ATCC 27343 / NCTC 10154).